The primary structure comprises 347 residues: NADH-ubiquinone oxidoreductase chain 2 (347 aa).

The next 10 membrane-spanning stretches (helical) occupy residues 3 to 23 (PLAL…TMMS), 25 to 45 (HWLT…PILM), 59 to 79 (YFMT…INLM), 93 to 115 (VASN…HFWV), 150 to 170 (NTNL…WGGL), 178 to 198 (ILAY…PFNP), 200 to 220 (LTLL…MILA), 240 to 260 (MTIM…LSGF), 274 to 294 (NSII…YFYM), and 326 to 346 (LPTL…ISML).

The protein belongs to the complex I subunit 2 family. As to quaternary structure, core subunit of respiratory chain NADH dehydrogenase (Complex I) which is composed of 45 different subunits. Interacts with TMEM242.

It is found in the mitochondrion inner membrane. It catalyses the reaction a ubiquinone + NADH + 5 H(+)(in) = a ubiquinol + NAD(+) + 4 H(+)(out). Functionally, core subunit of the mitochondrial membrane respiratory chain NADH dehydrogenase (Complex I) which catalyzes electron transfer from NADH through the respiratory chain, using ubiquinone as an electron acceptor. Essential for the catalytic activity and assembly of complex I. In Mammuthus primigenius (Siberian woolly mammoth), this protein is NADH-ubiquinone oxidoreductase chain 2.